The chain runs to 74 residues: Small integral membrane protein 15 (74 aa).

A helical transmembrane segment spans residues 20–40 (YGFLTTVILVLTPLFIISAAL). Positions 48–74 (IETREREQKKKRKRQENIVKAKRAKKD) form a coiled coil. The segment at 53–74 (REQKKKRKRQENIVKAKRAKKD) is disordered. Positions 56–74 (KKKRKRQENIVKAKRAKKD) are enriched in basic residues.

The protein belongs to the SMIM15 family.

The protein localises to the membrane. The sequence is that of Small integral membrane protein 15 (SMIM15) from Gallus gallus (Chicken).